The following is a 334-amino-acid chain: N-acetyl-gamma-glutamyl-phosphate reductase (334 aa).

Residue Cys-154 is part of the active site.

Belongs to the NAGSA dehydrogenase family. Type 1 subfamily.

The protein localises to the cytoplasm. It catalyses the reaction N-acetyl-L-glutamate 5-semialdehyde + phosphate + NADP(+) = N-acetyl-L-glutamyl 5-phosphate + NADPH + H(+). It participates in amino-acid biosynthesis; L-arginine biosynthesis; N(2)-acetyl-L-ornithine from L-glutamate: step 3/4. Its function is as follows. Catalyzes the NADPH-dependent reduction of N-acetyl-5-glutamyl phosphate to yield N-acetyl-L-glutamate 5-semialdehyde. The chain is N-acetyl-gamma-glutamyl-phosphate reductase from Photorhabdus laumondii subsp. laumondii (strain DSM 15139 / CIP 105565 / TT01) (Photorhabdus luminescens subsp. laumondii).